A 180-amino-acid chain; its full sequence is NAD(P)H-quinone oxidoreductase subunit I, chloroplastic (180 aa).

2 consecutive 4Fe-4S ferredoxin-type domains span residues 55–84 and 95–124; these read GRIH…VDWR and LNYS…MTEE. [4Fe-4S] cluster is bound by residues Cys64, Cys67, Cys70, Cys74, Cys104, Cys107, Cys110, and Cys114.

It belongs to the complex I 23 kDa subunit family. In terms of assembly, NDH is composed of at least 16 different subunits, 5 of which are encoded in the nucleus. The cofactor is [4Fe-4S] cluster.

It is found in the plastid. It localises to the chloroplast thylakoid membrane. The catalysed reaction is a plastoquinone + NADH + (n+1) H(+)(in) = a plastoquinol + NAD(+) + n H(+)(out). It catalyses the reaction a plastoquinone + NADPH + (n+1) H(+)(in) = a plastoquinol + NADP(+) + n H(+)(out). NDH shuttles electrons from NAD(P)H:plastoquinone, via FMN and iron-sulfur (Fe-S) centers, to quinones in the photosynthetic chain and possibly in a chloroplast respiratory chain. The immediate electron acceptor for the enzyme in this species is believed to be plastoquinone. Couples the redox reaction to proton translocation, and thus conserves the redox energy in a proton gradient. The chain is NAD(P)H-quinone oxidoreductase subunit I, chloroplastic from Agrostis stolonifera (Creeping bentgrass).